A 436-amino-acid chain; its full sequence is Trigger factor (436 aa).

Residues Thr163–Pro248 form the PPIase FKBP-type domain.

The protein belongs to the FKBP-type PPIase family. Tig subfamily.

It is found in the cytoplasm. The enzyme catalyses [protein]-peptidylproline (omega=180) = [protein]-peptidylproline (omega=0). Functionally, involved in protein export. Acts as a chaperone by maintaining the newly synthesized protein in an open conformation. Functions as a peptidyl-prolyl cis-trans isomerase. The polypeptide is Trigger factor (Laribacter hongkongensis (strain HLHK9)).